The chain runs to 151 residues: Ribosomal RNA large subunit methyltransferase H (151 aa).

Residues Leu-73, Gly-100, and 119–124 (LSKMTL) contribute to the S-adenosyl-L-methionine site.

The protein belongs to the RNA methyltransferase RlmH family. As to quaternary structure, homodimer.

Its subcellular location is the cytoplasm. It catalyses the reaction pseudouridine(1915) in 23S rRNA + S-adenosyl-L-methionine = N(3)-methylpseudouridine(1915) in 23S rRNA + S-adenosyl-L-homocysteine + H(+). In terms of biological role, specifically methylates the pseudouridine at position 1915 (m3Psi1915) in 23S rRNA. The polypeptide is Ribosomal RNA large subunit methyltransferase H (Campylobacter lari (strain RM2100 / D67 / ATCC BAA-1060)).